The primary structure comprises 449 residues: Hyaluronidase-1 (449 aa).

The N-terminal stretch at 1–23 is a signal peptide; it reads MYHIWIKFLAAWIFLKRFNGVHV. Cystine bridges form between Cys47/Cys340 and Cys211/Cys227. N-linked (GlcNAc...) asparagine glycosylation is found at Asn67, Asn103, and Asn111. Glu135 (proton donor) is an active-site residue. N-linked (GlcNAc...) asparagine glycosylation is present at Asn153. Residue Asn357 is glycosylated (N-linked (GlcNAc...) asparagine). 3 disulfides stabilise this stretch: Cys365–Cys376, Cys370–Cys427, and Cys429–Cys438. N-linked (GlcNAc...) asparagine glycosylation occurs at Asn401. The 12-residue stretch at 427 to 438 folds into the EGF-like domain; the sequence is CQCYQGWKGLYC.

This sequence belongs to the glycosyl hydrolase 56 family. In terms of assembly, monomer. As to expression, expressed by the venom gland.

Its subcellular location is the secreted. It catalyses the reaction Random hydrolysis of (1-&gt;4)-linkages between N-acetyl-beta-D-glucosamine and D-glucuronate residues in hyaluronate.. Its function is as follows. Snake venom endo-hyaluronidase that degrades hyaluronan to smaller oligosaccharide fragments. In venom, it is not toxic by itself, but increases the diffusion of other venom proteins by degrading the extracellular matrix. In addition, it displays antiedematogenic activity. This is Hyaluronidase-1 from Cerastes cerastes (Horned desert viper).